The following is a 1323-amino-acid chain: Inositol hexakisphosphate and diphosphoinositol-pentakisphosphate kinase (1323 aa).

26–27 (RK) is a substrate binding site. ATP is bound by residues Arg109, Lys162, His169, Arg188, 212 to 215 (EEFI), and 221 to 223 (DVK). Substrate is bound at residue 188–189 (RK). Lys223 and Arg237 together coordinate substrate. Residues Asp284 and 296-298 (DVN) each bind ATP. Substrate is bound at residue 301–304 (SFVK). Residues 355–426 (TTPSGKLAEL…VLELARALVI (72 aa)) are polyphosphoinositide-binding domain. 2 stretches are compositionally biased toward polar residues: residues 933 to 947 (FNLSTNPKPATSSRS) and 977 to 992 (VTPTQLSTPSVTNDDL). Disordered regions lie at residues 933 to 1022 (FNLS…SEDD), 1043 to 1107 (AMAD…GGGK), and 1134 to 1155 (IVIPTPVPSTTTAVVEDEASER). The segment covering 993-1006 (SISSNAESTAAEST) has biased composition (low complexity). A compositionally biased stretch (basic and acidic residues) spans 1062–1074 (KSMEEGDKPHGEW). Over residues 1090 to 1101 (SNEMESNNESME) the composition is skewed to low complexity.

The protein belongs to the histidine acid phosphatase family. VIP1 subfamily.

Its subcellular location is the cytoplasm. The protein localises to the cytosol. The enzyme catalyses 1D-myo-inositol hexakisphosphate + ATP = 1-diphospho-1D-myo-inositol 2,3,4,5,6-pentakisphosphate + ADP. It catalyses the reaction 5-diphospho-1D-myo-inositol 1,2,3,4,6-pentakisphosphate + ATP + H(+) = 1,5-bis(diphospho)-1D-myo-inositol 2,3,4,6-tetrakisphosphate + ADP. Bifunctional inositol kinase that acts in concert with the IP6K kinases to synthesize the diphosphate group-containing inositol pyrophosphates diphosphoinositol pentakisphosphate, PP-InsP5, and bis-diphosphoinositol tetrakisphosphate, (PP)2-InsP4. PP-InsP5 and (PP)2-InsP4, also respectively called InsP7 and InsP8, may regulate a variety of cellular processes, including apoptosis, vesicle trafficking, cytoskeletal dynamics, and exocytosis. Phosphorylates inositol hexakisphosphate (InsP6) at position 1 to produce PP-InsP5 which is in turn phosphorylated by IP6Ks to produce (PP)2-InsP4. Alternatively, phosphorylates PP-InsP5 at position 1, produced by IP6Ks from InsP6, to produce (PP)2-InsP4. The polypeptide is Inositol hexakisphosphate and diphosphoinositol-pentakisphosphate kinase (Caenorhabditis elegans).